Consider the following 489-residue polypeptide: MSKDAVDTAQVAAHPQATGTIPADAGDAGYSKDLKARHVNMIAIGGAIGTGLFLGAGGRLRDAGPALAIAYLVAGVFAFFVVKALGELVLYRPSSGSFVSYAREFLGEKGAYVAGWMYFLNWSTTGIADITAIALYTHYWSMFTSIPQWVLALVALAVVLAVNLISVKIFGEMEFWFAIVKVATLVGFMLIGIFLLATQHEVSGQTPGMGMITDHGGILPHGVMPVVLVMQGVIFSYAALELVGVAAGETAEPHKIVPRAVNSIMWRVALFYVGSVVLLALLLPSSLYSGDESPFVTVLSGIGVPAAGDVMNLVVLTAAMSSLNSGLYSTGRILRSMAMAGSAPRFTGVMSRSQVPYGGILLTCAVCVLGVGLNYLVPSKAFEIVLNVASLGIISTWVIIMICHLVFVRRARAGLVERPGFRLPGSPVTEIVTIAFLLAVVGLMWNDEEVGRKTVLLVPVIAVMLVAGWFGVRRRVAHQAGQERPAPRE.

The next 12 helical transmembrane spans lie at 38 to 58 (HVNM…GAGG), 62 to 82 (DAGP…FFVV), 113 to 133 (VAGW…ITAI), 150 to 170 (VLAL…VKIF), 175 to 195 (FWFA…GIFL), 223 to 243 (VMPV…LELV), 268 to 288 (VALF…SSLY), 302 to 322 (IGVP…AMSS), 357 to 377 (YGGI…NYLV), 382 to 402 (FEIV…IIMI), 426 to 446 (SPVT…LMWN), and 452 to 472 (RKTV…WFGV).

The protein belongs to the amino acid-polyamine-organocation (APC) superfamily. Amino acid transporter (AAT) (TC 2.A.3.1) family.

The protein resides in the cell membrane. This Streptomyces coelicolor (strain ATCC BAA-471 / A3(2) / M145) protein is L-asparagine permease (ansP).